A 717-amino-acid polypeptide reads, in one-letter code: MMFDKYFRKELDWGGRKLILETGKVARQADGAVVASYGDTVVLATVVGARSVKPGQDFFPLTVNYQEKFYAAGRIPGGFFKREGRPTERETLTSRLIDRPIRPLFPHGFRNEVQVIVNVLSHDLENEPDIVSLVAASAALTLSGIPFFGPVGAARIGYIDGEYILNPTSAQIAESRLDLVLAGTEEGVLMVESEAHELSEETMLGAVTFGHAAFQPVIQAIIELAEHAAKDPWPLVEESDEEKALAARVDELAREGLRAAYAEREKTARHEKIGAVKAAVLETLAAEERSVEKAKGMFKELEADIVRNAILDNGIRIDGRDTRTVRPILAEVGVLPRTHGSALFTRGETQALVVATLGTAQDEQIVDAIEGEYRERFLLHYNFPPFSVGETGRVGSPGRREVGHGKLAWRAIHPLLPGKDKFPYTLRVVSEITESNGSSSMATVCGTSLALMDAGVPLPRPVAGIAMGLIKEDKGFAVLSDILGDEDHLGDMDFKVAGTEAGVTSLQMDIKITSITPEIMKIALDQAKDGRLHILGEMSKALTGAREGVSANAPRITVINVPKDKIRDVIGTGGKVIREIVEYSGCKIDIEDDGTIKIAATSDEQAQKAIDRIRSLTSEPEVGQIYTGKVVKIADFGAFVNFFGARDGLVHISELAQGRVARTGDVVKVGDTVKVKMIGLDDRGKVKLSMRVVDQATGADISDQVGAKGGRREDAAE.

2 residues coordinate Mg(2+): D487 and D493. Residues 554-613 enclose the KH domain; the sequence is PRITVINVPKDKIRDVIGTGGKVIREIVEYSGCKIDIEDDGTIKIAATSDEQAQKAIDRI. Residues 623–691 form the S1 motif domain; that stretch reads GQIYTGKVVK…DRGKVKLSMR (69 aa).

It belongs to the polyribonucleotide nucleotidyltransferase family. The cofactor is Mg(2+).

The protein localises to the cytoplasm. It catalyses the reaction RNA(n+1) + phosphate = RNA(n) + a ribonucleoside 5'-diphosphate. Functionally, involved in mRNA degradation. Catalyzes the phosphorolysis of single-stranded polyribonucleotides processively in the 3'- to 5'-direction. The chain is Polyribonucleotide nucleotidyltransferase from Acidiphilium cryptum (strain JF-5).